The primary structure comprises 1923 residues: Nuclear pore complex protein GP210 (1923 aa).

The N-terminal stretch at 1 to 22 is a signal peptide; sequence MVPVSFCFFFLLLLLSAGESSS. N-linked (GlcNAc...) asparagine glycosylation is found at asparagine 73, asparagine 117, asparagine 289, asparagine 609, asparagine 863, asparagine 903, asparagine 967, asparagine 982, asparagine 1171, asparagine 1199, asparagine 1550, asparagine 1568, and asparagine 1743. The BIG2 domain maps to 1152–1205; sequence IFLVPGASYVLTIEGGPTMNVSVDYTTVDNEVAKIEKSGRLYATSPGNTTIYAT. Residues 1829–1849 traverse the membrane as a helical segment; it reads SVLLKILWGVLVLVVSVIILM.

It belongs to the NUP210 family. In terms of assembly, part of the nuclear pore complex (NPC). The NPC has an eight-fold symmetrical structure comprising a central transport channel and two rings, the cytoplasmic and nuclear rings, to which eight filaments are attached. The cytoplasmic filaments have loose ends, while the nuclear filaments are joined in a distal ring, forming a nuclear basket. NPCs are highly dynamic in configuration and composition, and can be devided in 3 subcomplexes, the NUP62 subcomplex, the NUP107-160 subcomplex and the NUP93 subcomplex, containing approximately 30 different nucleoporin proteins.

The protein resides in the nucleus envelope. It is found in the nucleus membrane. The protein localises to the nucleus. Its subcellular location is the nuclear pore complex. This chain is Nuclear pore complex protein GP210, found in Arabidopsis thaliana (Mouse-ear cress).